The chain runs to 599 residues: NADH-quinone oxidoreductase subunit C/D (599 aa).

An NADH dehydrogenase I subunit C region spans residues 1 to 189 (MTELMTQNSA…DPFVLTKQKE (189 aa)). Positions 213 to 599 (DFMFLNLGPN…IDFVMSDVDR (387 aa)) are NADH dehydrogenase I subunit D.

In the N-terminal section; belongs to the complex I 30 kDa subunit family. This sequence in the C-terminal section; belongs to the complex I 49 kDa subunit family. As to quaternary structure, NDH-1 is composed of 13 different subunits. Subunits NuoB, CD, E, F, and G constitute the peripheral sector of the complex.

It localises to the cell inner membrane. It carries out the reaction a quinone + NADH + 5 H(+)(in) = a quinol + NAD(+) + 4 H(+)(out). Its function is as follows. NDH-1 shuttles electrons from NADH, via FMN and iron-sulfur (Fe-S) centers, to quinones in the respiratory chain. The immediate electron acceptor for the enzyme in this species is believed to be ubiquinone. Couples the redox reaction to proton translocation (for every two electrons transferred, four hydrogen ions are translocated across the cytoplasmic membrane), and thus conserves the redox energy in a proton gradient. The polypeptide is NADH-quinone oxidoreductase subunit C/D (Sodalis glossinidius (strain morsitans)).